The chain runs to 393 residues: Asparagine--oxo-acid transaminase (393 aa).

Residues G39, W126, and N176 each coordinate L-asparagine. Position 239 is an N6-(pyridoxal phosphate)lysine (K239). R370 contacts L-asparagine.

It belongs to the class-I pyridoxal-phosphate-dependent aminotransferase family. It depends on pyridoxal 5'-phosphate as a cofactor.

The enzyme catalyses a 2-oxocarboxylate + L-asparagine = 2-oxosuccinamate + an L-alpha-amino acid. It carries out the reaction L-asparagine + 2-oxoglutarate = 2-oxosuccinamate + L-glutamate. Its function is as follows. Catalyzes the transamination reaction between L-asparagine and 2-oxoglutarate to produce L-glutamate and 2-oxosuccinamate. Is not active with pyruvate as amine acceptor. May also use other amino acids as substrates. The protein is Asparagine--oxo-acid transaminase of Streptococcus mutans serotype c (strain ATCC 700610 / UA159).